Consider the following 157-residue polypeptide: Small ribosomal subunit protein uS7 (157 aa).

It belongs to the universal ribosomal protein uS7 family. As to quaternary structure, part of the 30S ribosomal subunit. Contacts proteins S9 and S11.

Its function is as follows. One of the primary rRNA binding proteins, it binds directly to 16S rRNA where it nucleates assembly of the head domain of the 30S subunit. Is located at the subunit interface close to the decoding center, probably blocks exit of the E-site tRNA. This chain is Small ribosomal subunit protein uS7, found in Borrelia duttonii (strain Ly).